We begin with the raw amino-acid sequence, 286 residues long: MATEQIYKQFTSRTLLNFFEVAALTDGETNESVAAVCKIAAKDPAIVGVSVRPAFVRFIRQELVKSAPEVAGIKVCAAVNFPEGTGTPDTVSLEAVGALKDGADEIECLIDWRRMNENVADGESRIRLLVSEVKKVVGPKTLKVVLSGGELQGGDIISRAAVAALEGGADFLQTSSGLGATHATMFTVHLISIALREYMVRENERIRVEGINREGAAVRCIGIKIEVGDVHMAETADFLMQMIFENGPRSIVRDKFRVGGGFNLLKELRDCYESWDSVGVSPDTSP.

In terms of assembly, homodimer. Interacts with ADF; the interaction enhances ADF activity in disassembly of filamentous actin and inhibition of actin polymerization.

It localises to the cytoplasm. Involved in regulation of actin dynamics. The protein is Divergent deoxyribose-phosphate aldolase-like protein of Toxoplasma gondii.